Reading from the N-terminus, the 92-residue chain is RQC P-site tRNA stabilizing factor (92 aa).

The 61-residue stretch at 5–65 folds into the S4 RNA-binding domain; the sequence is MRLDKYLKVS…GPKIVTAKIE (61 aa).

The protein belongs to the RqcP family. Associates with stalled 50S ribosomal subunits. Binds to RqcH, 23S rRNA and the P-site tRNA. Does not require RqcH for association with 50S subunits.

Its function is as follows. Key component of the ribosome quality control system (RQC), a ribosome-associated complex that mediates the extraction of incompletely synthesized nascent chains from stalled ribosomes and their subsequent degradation. RqcH recruits Ala-charged tRNA, and with RqcP directs the elongation of stalled nascent chains on 50S ribosomal subunits, leading to non-templated C-terminal alanine extensions (Ala tail). The Ala tail promotes nascent chain degradation. RqcP is associated with the translocation-like movement of the peptidyl-tRNA from the A-site into the P-site. The sequence is that of RQC P-site tRNA stabilizing factor from Listeria monocytogenes serovar 1/2a (strain ATCC BAA-679 / EGD-e).